A 395-amino-acid polypeptide reads, in one-letter code: Na(+)/H(+) antiporter NhaA 1 (395 aa).

Transmembrane regions (helical) follow at residues 11 to 31, 63 to 83, 99 to 119, 129 to 149, 158 to 178, 183 to 203, 223 to 243, 258 to 278, 282 to 302, 332 to 352, and 364 to 384; these read FFSSDASGGIVLIIAAALAMV, MLLWINDALMAVFFLLIGLEV, VFPVIAALGGMIVPALVYLAF, GWAIPAATDIAFALGVLALLG, IFLMALAIIDDLGAIVIIALF, LSMLSLGVAAAAIAVLMALNL, VLKSGVHATLAGVIVGFMIPL, VLHPWVAFMILPLFAFANAGV, GVTLAGLTSLLPLGIMAGLFI, IMAVGILCGIGFTMSIFIATL, and WAKLGILIGSVLSAVVGYLIL.

This sequence belongs to the NhaA Na(+)/H(+) (TC 2.A.33) antiporter family.

It localises to the cell inner membrane. The catalysed reaction is Na(+)(in) + 2 H(+)(out) = Na(+)(out) + 2 H(+)(in). Its function is as follows. Na(+)/H(+) antiporter that extrudes sodium in exchange for external protons. This is Na(+)/H(+) antiporter NhaA 1 from Klebsiella pneumoniae subsp. pneumoniae (strain ATCC 700721 / MGH 78578).